The sequence spans 341 residues: Cysteine-rich with EGF-like domain protein 2 (341 aa).

A signal peptide spans 1 to 24 (MLLSCSIFRLFCIILLLQLGSIYT). In terms of domain architecture, EGF-like spans 136 to 178 (DCNTCIGGADRPCHGNGKCDGDGTRAGNGKCSCDEGYDGEFCL). 3 cysteine pairs are disulfide-bonded: Cys-140–Cys-154, Cys-148–Cys-166, and Cys-168–Cys-177. An N-linked (GlcNAc...) asparagine glycan is attached at Asn-190. FU repeat units follow at residues 193–248 (FFLC…DQYC) and 254–308 (SFSC…NQHC). Positions 291 to 317 (DIDECTEDPASCSDNQHCLNTDGSFSC) constitute an EGF-like 2; calcium-binding; truncated domain.

It belongs to the CRELD family.

The protein resides in the secreted. Its subcellular location is the endoplasmic reticulum. Its function is as follows. Possible role in neuronal acetylcholine receptor transport. The sequence is that of Cysteine-rich with EGF-like domain protein 2 (creld2) from Danio rerio (Zebrafish).